Reading from the N-terminus, the 556-residue chain is TNF receptor-associated factor 6-B (556 aa).

An RING-type; degenerate zinc finger spans residues 72-111 (CPICLMALREAVQTPCGHRFCKACIVKSLRDAGHKCPVDN). TRAF-type zinc fingers lie at residues 152-204 (RHLG…EDMS) and 205-261 (GHEL…NDLA). A coiled-coil region spans residues 318-356 (SHQDCSQETRNLRETIEQLEGRLVRQDHQIRELIAKMET). The MATH domain maps to 384-533 (NGVFIWKIKG…NDTLFVRCAV (150 aa)).

This sequence belongs to the TNF receptor-associated factor family. A subfamily. Homotrimer. Homooligomer.

It is found in the cytoplasm. Its subcellular location is the cell cortex. The protein resides in the nucleus. It localises to the lipid droplet. It carries out the reaction S-ubiquitinyl-[E2 ubiquitin-conjugating enzyme]-L-cysteine + [acceptor protein]-L-lysine = [E2 ubiquitin-conjugating enzyme]-L-cysteine + N(6)-ubiquitinyl-[acceptor protein]-L-lysine.. Its pathway is protein modification; protein ubiquitination. Its function is as follows. E3 ubiquitin ligase that, together with UBE2N and UBE2V1, mediates the synthesis of 'Lys-63'-linked-polyubiquitin chains conjugated to proteins, such as IKBKG, IRAK1, AKT1 and AKT2. Also mediates ubiquitination of free/unanchored polyubiquitin chain that leads to MAP3K7 activation. The protein is TNF receptor-associated factor 6-B (traf6-b) of Xenopus laevis (African clawed frog).